Reading from the N-terminus, the 294-residue chain is Glyceraldehyde-3-phosphate dehydrogenase (294 aa).

Asp19, Arg63, and Thr105 together coordinate NAD(+). D-glyceraldehyde 3-phosphate contacts are provided by residues 134–136 (SCT) and Thr165. Residue Cys135 is the Nucleophile of the active site. Residues 169–188 (KTVDGPSHKDWRGGRGASQN) form a disordered region. Residues 194–195 (TG) and Arg217 each bind D-glyceraldehyde 3-phosphate.

The protein belongs to the glyceraldehyde-3-phosphate dehydrogenase family. As to quaternary structure, homotetramer.

Its subcellular location is the cytoplasm. The catalysed reaction is D-glyceraldehyde 3-phosphate + phosphate + NAD(+) = (2R)-3-phospho-glyceroyl phosphate + NADH + H(+). Its pathway is carbohydrate degradation; glycolysis; pyruvate from D-glyceraldehyde 3-phosphate: step 1/5. Catalyzes the oxidative phosphorylation of glyceraldehyde 3-phosphate (G3P) to 1,3-bisphosphoglycerate (BPG) using the cofactor NAD. The first reaction step involves the formation of a hemiacetal intermediate between G3P and a cysteine residue, and this hemiacetal intermediate is then oxidized to a thioester, with concomitant reduction of NAD to NADH. The reduced NADH is then exchanged with the second NAD, and the thioester is attacked by a nucleophilic inorganic phosphate to produce BPG. The protein is Glyceraldehyde-3-phosphate dehydrogenase (gap) of Citrobacter freundii.